The primary structure comprises 387 residues: uncharacterized protein (387 aa).

Residues 5-25 (FVLFSFPFLLLSSMLIFYQTT) traverse the membrane as a helical segment.

This sequence belongs to the LicD transferase family.

It is found in the membrane. This is an uncharacterized protein from Caenorhabditis elegans.